A 227-amino-acid polypeptide reads, in one-letter code: Urease subunit gamma/beta (227 aa).

The tract at residues 1–101 (MRLTPTERDR…LAVVTDPIGG (101 aa)) is urease gamma. Residues 102–227 (GLGDQAPGAL…ACGYLGVEQR (126 aa)) are urease beta.

In the N-terminal section; belongs to the urease gamma subunit family. It in the C-terminal section; belongs to the urease beta subunit family. In terms of assembly, heterohexamer of 3 UreC (alpha) and 3 UreAB (gamma/beta) subunits.

It localises to the cytoplasm. The enzyme catalyses urea + 2 H2O + H(+) = hydrogencarbonate + 2 NH4(+). It participates in nitrogen metabolism; urea degradation; CO(2) and NH(3) from urea (urease route): step 1/1. This is Urease subunit gamma/beta from Streptomyces avermitilis (strain ATCC 31267 / DSM 46492 / JCM 5070 / NBRC 14893 / NCIMB 12804 / NRRL 8165 / MA-4680).